The chain runs to 289 residues: Glucosamine-6-phosphate deaminase 1 (289 aa).

Lys-64 is subject to N6-acetyllysine. Catalysis depends on Asp-72, which acts as the Proton acceptor; for enolization step. The For ring-opening step role is filled by Asp-141. His-143 functions as the Proton acceptor; for ring-opening step in the catalytic mechanism. The For ring-opening step role is filled by Glu-148. A Phosphothreonine modification is found at Thr-161.

It belongs to the glucosamine/galactosamine-6-phosphate isomerase family. As to quaternary structure, homohexamer.

Its subcellular location is the cytoplasm. It catalyses the reaction alpha-D-glucosamine 6-phosphate + H2O = beta-D-fructose 6-phosphate + NH4(+). It participates in nucleotide-sugar biosynthesis; UDP-N-acetyl-alpha-D-glucosamine biosynthesis; alpha-D-glucosamine 6-phosphate from D-fructose 6-phosphate: step 1/1. Its activity is regulated as follows. Allosterically activated by N-acetylglucosamine-6-phosphate (GlcNAc6P). Functionally, catalyzes the reversible conversion of alpha-D-glucosamine 6-phosphate (GlcN-6P) into beta-D-fructose 6-phosphate (Fru-6P) and ammonium ion, a regulatory reaction step in de novo uridine diphosphate-N-acetyl-alpha-D-glucosamine (UDP-GlcNAc) biosynthesis via hexosamine pathway. Deamination is coupled to aldo-keto isomerization mediating the metabolic flux from UDP-GlcNAc toward Fru-6P. At high ammonium level can drive amination and isomerization of Fru-6P toward hexosamines and UDP-GlcNAc synthesis. Has a role in fine tuning the metabolic fluctuations of cytosolic UDP-GlcNAc and their effects on hyaluronan synthesis that occur during tissue remodeling. Seems to trigger calcium oscillations in mammalian eggs. These oscillations serve as the essential trigger for egg activation and early development of the embryo. The protein is Glucosamine-6-phosphate deaminase 1 of Bos taurus (Bovine).